The primary structure comprises 148 residues: Ribonuclease H (148 aa).

One can recognise an RNase H type-1 domain in the interval 2-143 (TADIIYIYSD…ADVLANQGVL (142 aa)). Mg(2+) contacts are provided by aspartate 11, glutamate 49, aspartate 71, and aspartate 135.

It belongs to the RNase H family. In terms of assembly, monomer. Mg(2+) is required as a cofactor.

The protein localises to the cytoplasm. The catalysed reaction is Endonucleolytic cleavage to 5'-phosphomonoester.. Functionally, endonuclease that specifically degrades the RNA of RNA-DNA hybrids. This Thiobacillus denitrificans (strain ATCC 25259 / T1) protein is Ribonuclease H.